The chain runs to 76 residues: Signal recognition particle 9 kDa protein (76 aa).

It belongs to the SRP9 family. As to quaternary structure, heterodimer with SRP14; binds RNA as heterodimer. Component of a signal recognition particle complex that consists of a 7SL RNA molecule of 300 nucleotides and six protein subunits: srpa-72, srpa-68, SRP54, F37F2.2/SRP19, F25G6.8/SRP14 and ZK512.4/SRP9.

It localises to the cytoplasm. Component of the signal recognition particle (SRP) complex, a ribonucleoprotein complex that mediates the cotranslational targeting of secretory and membrane proteins to the endoplasmic reticulum (ER). SRP9 together with SRP14 and the Alu portion of the SRP RNA, constitutes the elongation arrest domain of SRP. The complex of SRP9 and SRP14 is required for SRP RNA binding. This chain is Signal recognition particle 9 kDa protein, found in Caenorhabditis elegans.